Here is an 823-residue protein sequence, read N- to C-terminus: Transcription factor SPT20 homolog-like 1 (823 aa).

Disordered stretches follow at residues 246-273 (SVKP…KEER), 369-524 (PRKK…AAQP), 560-601 (GSSF…AVQA), 631-669 (VLTG…LGLS), and 720-757 (LRQQ…PQHI). Residues 423–440 (SHSSSGPASVSQLSSWKT) show a composition bias toward polar residues. Low complexity-rich tracts occupy residues 469–509 (SSSG…QKPS), 568–582 (APGS…ISGS), and 636–650 (QQQS…QLQQ).

This sequence belongs to the SPT20 family.

In Homo sapiens (Human), this protein is Transcription factor SPT20 homolog-like 1 (SUPT20HL1).